The sequence spans 34 residues: Photosystem II reaction center protein M (34 aa).

A helical transmembrane segment spans residues 5–25 (ILAFIATALFILIPTAFLLII).

This sequence belongs to the PsbM family. In terms of assembly, PSII is composed of 1 copy each of membrane proteins PsbA, PsbB, PsbC, PsbD, PsbE, PsbF, PsbH, PsbI, PsbJ, PsbK, PsbL, PsbM, PsbT, PsbX, PsbY, PsbZ, Psb30/Ycf12, at least 3 peripheral proteins of the oxygen-evolving complex and a large number of cofactors. It forms dimeric complexes.

The protein resides in the plastid. It localises to the chloroplast thylakoid membrane. In terms of biological role, one of the components of the core complex of photosystem II (PSII). PSII is a light-driven water:plastoquinone oxidoreductase that uses light energy to abstract electrons from H(2)O, generating O(2) and a proton gradient subsequently used for ATP formation. It consists of a core antenna complex that captures photons, and an electron transfer chain that converts photonic excitation into a charge separation. This subunit is found at the monomer-monomer interface. In Lolium perenne (Perennial ryegrass), this protein is Photosystem II reaction center protein M.